A 959-amino-acid polypeptide reads, in one-letter code: DNA-directed RNA polymerase subunit beta'' (959 aa).

4 residues coordinate Zn(2+): Cys211, Cys288, Cys295, and Cys298.

The protein belongs to the RNA polymerase beta' chain family. RpoC2 subfamily. In terms of assembly, in plastids the minimal PEP RNA polymerase catalytic core is composed of four subunits: alpha, beta, beta', and beta''. When a (nuclear-encoded) sigma factor is associated with the core the holoenzyme is formed, which can initiate transcription. The cofactor is Zn(2+).

The protein resides in the plastid. It localises to the apicoplast. The enzyme catalyses RNA(n) + a ribonucleoside 5'-triphosphate = RNA(n+1) + diphosphate. In terms of biological role, DNA-dependent RNA polymerase catalyzes the transcription of DNA into RNA using the four ribonucleoside triphosphates as substrates. This Plasmodium falciparum (isolate 3D7) protein is DNA-directed RNA polymerase subunit beta''.